The sequence spans 337 residues: GDP-fucose transporter, Golgi (337 aa).

The next 8 helical transmembrane spans lie at 13–35 (NKYLKIFFVVSLYWCTSILTVFV), 45–67 (VNLGAPLFMSWFQCVVSTVICFV), 95–117 (ILPLSVLYTLMIGANNLSLSYVT), 121–140 (YYIGRSLTTVFSVVLTYVIL), 145–163 (SFKCLLCCGAIVVGFWLGV), 173–192 (SWRGTIFGVLSSLALAMFSI), 205–227 (VWLLSYYNNLYSTLLFLPLIIIN), and 242–264 (SWFWAAMTLSGLCGFAIGFVTAL).

The protein belongs to the TPT transporter family. SLC35C subfamily.

It localises to the golgi apparatus membrane. Its function is as follows. Involved in GDP-fucose import from the cytoplasm into the Golgi lumen. Plays a major role in the fucosylation of N-glycans. Functions redundantly with Efr in the O-fucosylation of Notch, positively regulating Notch signaling. The polypeptide is GDP-fucose transporter, Golgi (Drosophila melanogaster (Fruit fly)).